We begin with the raw amino-acid sequence, 154 residues long: Transcriptional repressor NrdR (154 aa).

A zinc finger spans residues 3 to 34; that stretch reads CPFCRHPDSRVVDSRETDEGQAIRRRRSCPEC. The region spanning 46–136 is the ATP-cone domain; it reads LAVVKRSGVT…VYRSFSSAED (91 aa).

Belongs to the NrdR family. Requires Zn(2+) as cofactor.

In terms of biological role, negatively regulates transcription of bacterial ribonucleotide reductase nrd genes and operons by binding to NrdR-boxes. This is Transcriptional repressor NrdR from Mycolicibacterium vanbaalenii (strain DSM 7251 / JCM 13017 / BCRC 16820 / KCTC 9966 / NRRL B-24157 / PYR-1) (Mycobacterium vanbaalenii).